The primary structure comprises 376 residues: Lipid-A-disaccharide synthase (376 aa).

The protein belongs to the LpxB family.

The catalysed reaction is a lipid X + a UDP-2-N,3-O-bis[(3R)-3-hydroxyacyl]-alpha-D-glucosamine = a lipid A disaccharide + UDP + H(+). The protein operates within bacterial outer membrane biogenesis; LPS lipid A biosynthesis. Its function is as follows. Condensation of UDP-2,3-diacylglucosamine and 2,3-diacylglucosamine-1-phosphate to form lipid A disaccharide, a precursor of lipid A, a phosphorylated glycolipid that anchors the lipopolysaccharide to the outer membrane of the cell. In Pseudomonas fluorescens (strain Pf0-1), this protein is Lipid-A-disaccharide synthase.